A 401-amino-acid chain; its full sequence is Imidazolonepropionase (401 aa).

H66 and H68 together coordinate Fe(3+). H66 and H68 together coordinate Zn(2+). Positions 75, 138, and 171 each coordinate 4-imidazolone-5-propanoate. Y138 is a binding site for N-formimidoyl-L-glutamate. Position 236 (H236) interacts with Fe(3+). Position 236 (H236) interacts with Zn(2+). Q239 serves as a coordination point for 4-imidazolone-5-propanoate. D311 is a Fe(3+) binding site. Position 311 (D311) interacts with Zn(2+). N-formimidoyl-L-glutamate is bound by residues N313 and G315. T316 lines the 4-imidazolone-5-propanoate pocket.

This sequence belongs to the metallo-dependent hydrolases superfamily. HutI family. Zn(2+) serves as cofactor. Requires Fe(3+) as cofactor.

The protein resides in the cytoplasm. It carries out the reaction 4-imidazolone-5-propanoate + H2O = N-formimidoyl-L-glutamate. Its pathway is amino-acid degradation; L-histidine degradation into L-glutamate; N-formimidoyl-L-glutamate from L-histidine: step 3/3. Its function is as follows. Catalyzes the hydrolytic cleavage of the carbon-nitrogen bond in imidazolone-5-propanoate to yield N-formimidoyl-L-glutamate. It is the third step in the universal histidine degradation pathway. The sequence is that of Imidazolonepropionase from Acinetobacter baumannii (strain AB0057).